We begin with the raw amino-acid sequence, 255 residues long: Sushi domain-containing protein 3 (255 aa).

The disordered stretch occupies residues Met1–Pro25. The Extracellular portion of the chain corresponds to Met1–Lys103. Asn27 carries an N-linked (GlcNAc...) asparagine glycan. The 64-residue stretch at Gly30 to Leu93 folds into the Sushi domain. Intrachain disulfides connect Cys32–Cys75 and Cys61–Cys91. Residues Val104 to Leu124 form a helical membrane-spanning segment. Over Thr125–Gly255 the chain is Cytoplasmic. Positions Ser173 to Gly255 are disordered. A compositionally biased stretch (basic and acidic residues) spans His179–Ser191.

Highly expressed in estrogen receptor-positive breast tumors.

The protein resides in the cell membrane. In terms of biological role, may play a role in breast tumorigenesis by promoting estrogen-dependent cell proliferation, cell-cell interactions and migration. In Homo sapiens (Human), this protein is Sushi domain-containing protein 3 (SUSD3).